The chain runs to 264 residues: Apolipoprotein A-I (264 aa).

A signal peptide spans 1-18 (MKAVLLVVAALFLAGSQA). Tandem repeats lie at residues 67-88 (LRLS…ADFG) and 89-110 (LATQ…QIVS). A 10 X approximate tandem repeats region spans residues 67–264 (LRLSDNWDTL…DQASKQLAAQ (198 aa)). One copy of the 3; half-length repeat lies at 111 to 121 (EDLQDVKHKVQ). Tandem repeats lie at residues 122-143 (PYLE…EKVR), 144-165 (PLGI…EKLT), 166-187 (PLGE…TQLA), 188-207 (PFSE…LKDS), and 208-229 (ATLA…EKAK). M193 is modified (methionine sulfoxide). A 9; half-length repeat occupies 230–240 (PALEDLRQGLL). Repeat unit 10 spans residues 241 to 264 (PVLENLKASILSSIDQASKQLAAQ).

Belongs to the apolipoprotein A1/A4/E family. Homodimer. Interacts with APOA1BP and CLU. Component of a sperm activating protein complex (SPAP), consisting of APOA1, an immunoglobulin heavy chain, an immunoglobulin light chain and albumin. Interacts with NDRG1. Interacts with SCGB3A2. Interacts with NAXE and YJEFN3. Glycosylated. In terms of processing, palmitoylated. Post-translationally, phosphorylation sites are present in the extracellular medium.

It is found in the secreted. Participates in the reverse transport of cholesterol from tissues to the liver for excretion by promoting cholesterol efflux from tissues and by acting as a cofactor for the lecithin cholesterol acyltransferase (LCAT). As part of the SPAP complex, activates spermatozoa motility. The polypeptide is Apolipoprotein A-I (APOA1) (Cavia porcellus (Guinea pig)).